Consider the following 114-residue polypeptide: Iron-sulfur cluster insertion protein ErpA (114 aa).

Positions 42, 106, and 108 each coordinate iron-sulfur cluster.

This sequence belongs to the HesB/IscA family. In terms of assembly, homodimer. It depends on iron-sulfur cluster as a cofactor.

In terms of biological role, required for insertion of 4Fe-4S clusters for at least IspG. This Shigella boydii serotype 18 (strain CDC 3083-94 / BS512) protein is Iron-sulfur cluster insertion protein ErpA.